The sequence spans 901 residues: HTH-type transcriptional regulator MalT (901 aa).

39 to 46 (SPAGYGKT) is a binding site for ATP. Positions 829 to 894 (ELIRTSPLTQ…AAVQHAQKLL (66 aa)) constitute an HTH luxR-type domain. The segment at residues 853–872 (NEQIAGELEVAATTIKTHIR) is a DNA-binding region (H-T-H motif).

Belongs to the MalT family. As to quaternary structure, monomer in solution. Oligomerizes to an active state in the presence of the positive effectors ATP and maltotriose.

Activated by ATP and maltotriose, which are both required for DNA binding. Positively regulates the transcription of the maltose regulon whose gene products are responsible for uptake and catabolism of malto-oligosaccharides. Specifically binds to the promoter region of its target genes, recognizing a short DNA motif called the MalT box. This chain is HTH-type transcriptional regulator MalT, found in Escherichia coli O139:H28 (strain E24377A / ETEC).